A 193-amino-acid chain; its full sequence is Outer-membrane lipoprotein LolB (193 aa).

Residues 1–21 form the signal peptide; the sequence is MRPARRFLAALACVAGALLSA. The N-palmitoyl cysteine moiety is linked to residue Cys22. Residue Cys22 is the site of S-diacylglycerol cysteine attachment.

The protein belongs to the LolB family. As to quaternary structure, monomer.

The protein resides in the cell outer membrane. Functionally, plays a critical role in the incorporation of lipoproteins in the outer membrane after they are released by the LolA protein. This is Outer-membrane lipoprotein LolB from Azoarcus sp. (strain BH72).